We begin with the raw amino-acid sequence, 348 residues long: Dihydroorotase (348 aa).

2 residues coordinate Zn(2+): H14 and H16. Residues 16–18 (HLR) and N42 contribute to the substrate site. 3 residues coordinate Zn(2+): K100, H137, and H175. K100 bears the N6-carboxylysine mark. Position 137 (H137) interacts with substrate. L220 contacts substrate. D248 is a binding site for Zn(2+). D248 is a catalytic residue. Substrate contacts are provided by H252 and A264.

The protein belongs to the metallo-dependent hydrolases superfamily. DHOase family. Class II DHOase subfamily. As to quaternary structure, homodimer. It depends on Zn(2+) as a cofactor.

It carries out the reaction (S)-dihydroorotate + H2O = N-carbamoyl-L-aspartate + H(+). It participates in pyrimidine metabolism; UMP biosynthesis via de novo pathway; (S)-dihydroorotate from bicarbonate: step 3/3. Its function is as follows. Catalyzes the reversible cyclization of carbamoyl aspartate to dihydroorotate. The protein is Dihydroorotase of Azotobacter vinelandii (strain DJ / ATCC BAA-1303).